Consider the following 451-residue polypeptide: Tubulin alpha chain (451 aa).

Residue glutamine 11 coordinates GTP. Lysine 40 carries the N6-acetyllysine modification. Glutamate 71, glycine 144, threonine 145, threonine 179, asparagine 206, and asparagine 228 together coordinate GTP. Position 71 (glutamate 71) interacts with Mg(2+). The active site involves glutamate 254.

It belongs to the tubulin family. As to quaternary structure, dimer of alpha and beta chains. A typical microtubule is a hollow water-filled tube with an outer diameter of 25 nm and an inner diameter of 15 nM. Alpha-beta heterodimers associate head-to-tail to form protofilaments running lengthwise along the microtubule wall with the beta-tubulin subunit facing the microtubule plus end conferring a structural polarity. Microtubules usually have 13 protofilaments but different protofilament numbers can be found in some organisms and specialized cells. Mg(2+) serves as cofactor. Post-translationally, undergoes a tyrosination/detyrosination cycle, the cyclic removal and re-addition of a C-terminal tyrosine residue by the enzymes tubulin tyrosine carboxypeptidase (TTCP) and tubulin tyrosine ligase (TTL), respectively. In terms of processing, acetylation of alpha chains at Lys-40 stabilizes microtubules and affects affinity and processivity of microtubule motors. This modification has a role in multiple cellular functions, ranging from cell motility, cell cycle progression or cell differentiation to intracellular trafficking and signaling.

The protein localises to the cytoplasm. Its subcellular location is the cytoskeleton. The enzyme catalyses GTP + H2O = GDP + phosphate + H(+). Functionally, tubulin is the major constituent of microtubules, a cylinder consisting of laterally associated linear protofilaments composed of alpha- and beta-tubulin heterodimers. Microtubules grow by the addition of GTP-tubulin dimers to the microtubule end, where a stabilizing cap forms. Below the cap, tubulin dimers are in GDP-bound state, owing to GTPase activity of alpha-tubulin. The protein is Tubulin alpha chain (TUBA) of Chlorella vulgaris (Green alga).